The chain runs to 127 residues: Fluoride-specific ion channel FluC (127 aa).

A run of 4 helical transmembrane segments spans residues 4–24 (LLLA…LLSM), 35–55 (LGTL…FAWF), 71–91 (TGFC…VFLL), and 103–123 (VFVN…LFSA). Na(+) contacts are provided by G75 and T78.

The protein belongs to the fluoride channel Fluc/FEX (TC 1.A.43) family.

The protein resides in the cell inner membrane. It catalyses the reaction fluoride(in) = fluoride(out). With respect to regulation, na(+) is not transported, but it plays an essential structural role and its presence is essential for fluoride channel function. Functionally, fluoride-specific ion channel. Important for reducing fluoride concentration in the cell, thus reducing its toxicity. The polypeptide is Fluoride-specific ion channel FluC (Escherichia coli O7:K1 (strain IAI39 / ExPEC)).